The following is a 319-amino-acid chain: Malate dehydrogenase (319 aa).

Residues 7-13 and D34 each bind NAD(+); that span reads GAAGGIG. Substrate is bound by residues R81 and R87. Residues N94 and 117–119 each bind NAD(+); that span reads ITN. The substrate site is built by N119 and R153. H177 serves as the catalytic Proton acceptor. M227 contributes to the NAD(+) binding site.

This sequence belongs to the LDH/MDH superfamily. MDH type 1 family. As to quaternary structure, homodimer.

It carries out the reaction (S)-malate + NAD(+) = oxaloacetate + NADH + H(+). Catalyzes the reversible oxidation of malate to oxaloacetate. The chain is Malate dehydrogenase from Psychromonas ingrahamii (strain DSM 17664 / CCUG 51855 / 37).